The following is a 27-amino-acid chain: AnmTX Sco 9a-1 (27 aa).

Position 6 is a hydroxyproline (Pro6). Intrachain disulfides connect Cys7–Cys18 and Cys10–Cys25.

Functionally, has analgesic and anti-inflammatory activity in vivo. At a dose of 0.1 and 1 mg/kg, exhibits anti-inflammatory activity by reducing the volume of edema during 24 h better than the nonsteroidal anti-inflammatory drug, Diclofenac, at dose of 1 mg/kg in a mouse model of acute local lambda-carrageenan-induced inflammation. At a dose of 1 mg/kg, reduces the content of tumor necrosis factor-alpha (TNF-alpha). Demonstrates a significant analgesic effect on acute pain sensitivity in the carrageenan-induced thermal hyperalgesia model at doses of 0.1 and 1 mg/kg. Not toxic in mice, however stimulates exploratory motivation and active search behavior, and demonstrates an anti-anxiety effect. Does not exhibit any effect on currents of rat acid-sensing ion channels ASIC1a or ASIC3. The protein is AnmTX Sco 9a-1 of Stomphia coccinea (Spotted swimming anemone).